The chain runs to 156 residues: Single-stranded DNA-binding protein 1 (156 aa).

Residues 1-104 (MLNRTILVGR…VVADSIQFLE (104 aa)) form the SSB domain. The interval 122-146 (QTRGQSQYSNNKPVKDNPFANANCP) is disordered.

As to quaternary structure, homotetramer.

This is Single-stranded DNA-binding protein 1 (ssb1) from Staphylococcus aureus (strain MSSA476).